Here is a 124-residue protein sequence, read N- to C-terminus: MPTIKQLIRNTRQPIRNVTKSPALRGCPQRRGTCTRVYSTITPKKPNSALRKVARVRLTSGFEITAYIPGIGHNLQEHSVVLVRGGRVKDLPGVRYHIVRGTLDAVGVKDRQQGRSKYGVKKPK.

Belongs to the universal ribosomal protein uS12 family. Part of the 30S ribosomal subunit.

Its subcellular location is the plastid. The protein resides in the chloroplast. Its function is as follows. With S4 and S5 plays an important role in translational accuracy. Located at the interface of the 30S and 50S subunits. The sequence is that of Small ribosomal subunit protein uS12cy (rps12-B) from Olimarabidopsis pumila (Dwarf rocket).